We begin with the raw amino-acid sequence, 105 residues long: Urease subunit gamma (105 aa).

It belongs to the urease gamma subunit family. Heterotrimer of UreA (gamma), UreB (beta) and UreC (alpha) subunits. Three heterotrimers associate to form the active enzyme.

The protein resides in the cytoplasm. It carries out the reaction urea + 2 H2O + H(+) = hydrogencarbonate + 2 NH4(+). Its pathway is nitrogen metabolism; urea degradation; CO(2) and NH(3) from urea (urease route): step 1/1. This Bacillus subtilis (strain 168) protein is Urease subunit gamma.